The following is a 759-amino-acid chain: Glycerophosphodiester phosphodiesterase GDPDL3 (759 aa).

The N-terminal stretch at 1 to 27 (MRGLLRASSLLLCGVILIQLLAAQIHA) is a signal peptide. Residues 28-738 (QSKKPKSPWP…TNAQAPSGQT (711 aa)) are Extracellular-facing. Residues 44-344 (PLVIARGGFS…DFPITASASL (301 aa)) form the GP-PDE 1 domain. 12 N-linked (GlcNAc...) asparagine glycosylation sites follow: Asn99, Asn186, Asn242, Asn251, Asn326, Asn353, Asn413, Asn424, Asn488, Asn528, Asn540, and Asn647. The GP-PDE 2 domain maps to 360–661 (FLVITKDGAS…EFPFTAARYK (302 aa)). Residues 702-734 (FTDADVTEPPLPPVTAKAPTSSPGTPSTNAQAP) are disordered. The segment covering 719-734 (APTSSPGTPSTNAQAP) has biased composition (polar residues). A helical membrane pass occupies residues 739 to 759 (RITLSLLLSVFAMVLASLLLL).

It belongs to the glycerophosphoryl diester phosphodiesterase family. In terms of tissue distribution, expressed in roots, shoots, rosette and cauline leaves, stems, flowers and siliques.

The protein resides in the cell membrane. The catalysed reaction is a sn-glycero-3-phosphodiester + H2O = an alcohol + sn-glycerol 3-phosphate + H(+). In terms of biological role, involved in primary cell wall organization. Required for the accumulation of crystalline cellulose. This chain is Glycerophosphodiester phosphodiesterase GDPDL3, found in Arabidopsis thaliana (Mouse-ear cress).